We begin with the raw amino-acid sequence, 138 residues long: Large ribosomal subunit protein uL16 (138 aa).

Residues 1-19 (MLIPRRVKHRKQHHPKRSG) show a composition bias toward basic residues. Residues 1-24 (MLIPRRVKHRKQHHPKRSGAAKGG) are disordered.

The protein belongs to the universal ribosomal protein uL16 family. In terms of assembly, part of the 50S ribosomal subunit.

Its function is as follows. Binds 23S rRNA and is also seen to make contacts with the A and possibly P site tRNAs. This is Large ribosomal subunit protein uL16 from Micrococcus luteus (strain ATCC 4698 / DSM 20030 / JCM 1464 / CCM 169 / CCUG 5858 / IAM 1056 / NBRC 3333 / NCIMB 9278 / NCTC 2665 / VKM Ac-2230) (Micrococcus lysodeikticus).